The chain runs to 196 residues: Orotate phosphoribosyltransferase (196 aa).

5-phospho-alpha-D-ribose 1-diphosphate is bound by residues arginine 102, lysine 103, lysine 106, histidine 108, and 129–137; that span reads EDVVTTGGS. Orotate is bound by residues threonine 133 and arginine 161.

This sequence belongs to the purine/pyrimidine phosphoribosyltransferase family. PyrE subfamily. As to quaternary structure, homodimer. Requires Mg(2+) as cofactor.

The catalysed reaction is orotidine 5'-phosphate + diphosphate = orotate + 5-phospho-alpha-D-ribose 1-diphosphate. It functions in the pathway pyrimidine metabolism; UMP biosynthesis via de novo pathway; UMP from orotate: step 1/2. Its function is as follows. Catalyzes the transfer of a ribosyl phosphate group from 5-phosphoribose 1-diphosphate to orotate, leading to the formation of orotidine monophosphate (OMP). In Prochlorococcus marinus (strain MIT 9303), this protein is Orotate phosphoribosyltransferase.